The sequence spans 303 residues: Lipase chaperone (303 aa).

The chain crosses the membrane as a helical span at residues 7–23; the sequence is TLAAACAAWLAWWAWPD.

Belongs to the lipase chaperone family.

Its subcellular location is the cell inner membrane. Functionally, may be involved in the folding of the extracellular lipase during its passage through the periplasm. The sequence is that of Lipase chaperone (lifO) from Chromobacterium violaceum (strain ATCC 12472 / DSM 30191 / JCM 1249 / CCUG 213 / NBRC 12614 / NCIMB 9131 / NCTC 9757 / MK).